A 974-amino-acid chain; its full sequence is Exocyst complex component 4 (974 aa).

A2 bears the N-acetylalanine mark. An N6-acetyllysine modification is found at K9. A phosphoserine mark is found at S32 and S226. Residues 32–114 (STSDDVEDRE…HCKRDELRKL (83 aa)) adopt a coiled-coil conformation. Phosphothreonine is present on residues T233 and T237. S468 is subject to Phosphoserine.

Belongs to the SEC8 family. In terms of assembly, the exocyst complex is composed of EXOC1, EXOC2, EXOC3, EXOC4, EXOC5, EXOC6, EXOC7 and EXOC8. Interacts with BIRC6/bruce. Interacts with MYRIP. Interacts with SH3BP1; required for the localization of both SH3BP1 and the exocyst to the leading edge of migrating cells. Interacts with SLC6A9.

It is found in the midbody. It localises to the midbody ring. The protein resides in the cell projection. Its subcellular location is the cytoplasm. The protein localises to the cytoskeleton. It is found in the microtubule organizing center. It localises to the centrosome. In terms of biological role, component of the exocyst complex involved in the docking of exocytic vesicles with fusion sites on the plasma membrane. The polypeptide is Exocyst complex component 4 (EXOC4) (Homo sapiens (Human)).